A 219-amino-acid polypeptide reads, in one-letter code: Peroxiredoxin-5, mitochondrial (219 aa).

The N-terminal 57 residues, 1–57 (MRLGWLRVLGCRPGSVVSRATIVEGASTTAAGTRGCLEGILEWTFGGVRGFRSAAVA), are a transit peptide targeting the mitochondrion. Residues 61–219 (IKVGDAIPSV…SLAPNILSQL (159 aa)) enclose the Thioredoxin domain. Lys80 carries the post-translational modification N6-acetyllysine. Residue Lys88 is modified to N6-acetyllysine; alternate. An N6-succinyllysine; alternate modification is found at Lys88. The active-site Cysteine sulfenic acid (-SOH) intermediate is Cys105. The S-palmitoyl cysteine moiety is linked to residue Cys105. An intrachain disulfide couples Cys105 to Cys209. Position 121 is an N6-succinyllysine (Lys121). Ser187 carries the phosphoserine modification. Positions 217–219 (SQL) match the Microbody targeting signal motif.

Belongs to the peroxiredoxin family. Prx5 subfamily. Monomer. In terms of processing, S-palmitoylated. Palmitoylation occurs on the active site, inhibiting its reactivity; therefore PRDX5 palmitoylation status determines its antioxidant capacity. S-palmitoylated. Depalmitoylated by ABHD10.

It localises to the mitochondrion. It is found in the cytoplasm. Its subcellular location is the peroxisome matrix. It catalyses the reaction a hydroperoxide + [thioredoxin]-dithiol = an alcohol + [thioredoxin]-disulfide + H2O. Functionally, thiol-specific peroxidase that catalyzes the reduction of hydrogen peroxide and organic hydroperoxides to water and alcohols, respectively. Plays a role in cell protection against oxidative stress by detoxifying peroxides and as sensor of hydrogen peroxide-mediated signaling events. The sequence is that of Peroxiredoxin-5, mitochondrial (PRDX5) from Bos taurus (Bovine).